The following is a 264-amino-acid chain: Thymidylate synthase (264 aa).

Arg21 provides a ligand contact to dUMP. (6R)-5,10-methylene-5,6,7,8-tetrahydrofolate is bound at residue His51. Position 126–127 (126–127 (RR)) interacts with dUMP. Residue Cys146 is the Nucleophile of the active site. Residues 166–169 (RSAD), Asn177, and 207–209 (HLY) contribute to the dUMP site. Asp169 lines the (6R)-5,10-methylene-5,6,7,8-tetrahydrofolate pocket. Ala263 contributes to the (6R)-5,10-methylene-5,6,7,8-tetrahydrofolate binding site.

The protein belongs to the thymidylate synthase family. Bacterial-type ThyA subfamily. In terms of assembly, homodimer.

The protein localises to the cytoplasm. It catalyses the reaction dUMP + (6R)-5,10-methylene-5,6,7,8-tetrahydrofolate = 7,8-dihydrofolate + dTMP. It functions in the pathway pyrimidine metabolism; dTTP biosynthesis. Its function is as follows. Catalyzes the reductive methylation of 2'-deoxyuridine-5'-monophosphate (dUMP) to 2'-deoxythymidine-5'-monophosphate (dTMP) while utilizing 5,10-methylenetetrahydrofolate (mTHF) as the methyl donor and reductant in the reaction, yielding dihydrofolate (DHF) as a by-product. This enzymatic reaction provides an intracellular de novo source of dTMP, an essential precursor for DNA biosynthesis. This chain is Thymidylate synthase, found in Cytophaga hutchinsonii (strain ATCC 33406 / DSM 1761 / CIP 103989 / NBRC 15051 / NCIMB 9469 / D465).